The chain runs to 38 residues: 4 kDa defensin (38 aa).

Cystine bridges form between Cys4-Cys25, Cys11-Cys33, and Cys15-Cys35.

This sequence belongs to the invertebrate defensin family. Type 2 subfamily.

It is found in the secreted. Functionally, dual-function peptide with antimicrobial and potassium channel-blocking activities. Shows inhibitory activity against Gram-positive bacteria such as M.luteus, S.aureus, B.subtilis, and M.luteus as well as methicillin-resistant S.aureus (MIC=0.1-20 uM). Does not act on bacteria by disrupting membranes. Also moderately inhibits Kv1.1/KCNA1, Kv1.2/KCNA2, and Kv1.3/KCNA3 potassium channels. Inhibits potassium channels by interacting with the pore region. Does not show hemolytic activity. In Leiurus hebraeus (Hebrew deathstalker scorpion), this protein is 4 kDa defensin.